Consider the following 979-residue polypeptide: UPF0182 protein MT0070 (979 aa).

The next 7 helical transmembrane spans lie at 19 to 41 (LVTA…DIYV), 63 to 85 (LAIV…LLAY), 114 to 136 (LFGW…FDWV), 174 to 196 (WLFV…FGGL), 208 to 230 (AARV…AYWL), 261 to 280 (LVLV…AIFL), and 285 to 307 (IPAM…WPLL). The segment at 894–948 (VFGPGTGRVATXPGGDAASAPPPGAGGPAPPQGVPPPRTTQPPAAPPRGPDVPPA) is disordered. The span at 913-946 (APPPGAGGPAPPQGVPPPRTTQPPAAPPRGPDVP) shows a compositional bias: pro residues.

This sequence belongs to the UPF0182 family.

It is found in the cell membrane. The sequence is that of UPF0182 protein MT0070 from Mycobacterium tuberculosis (strain CDC 1551 / Oshkosh).